Here is a 174-residue protein sequence, read N- to C-terminus: Shikimate kinase 2 (174 aa).

12–17 is a binding site for ATP; the sequence is GCGKTT. T16 and D32 together coordinate Mg(2+). The substrate site is built by D34, R58, and G79. The interval 112–126 is LID domain; the sequence is QAAPEEDLRPTLTGK. R120 contacts ATP. Substrate is bound at residue R139.

The protein belongs to the shikimate kinase family. AroL subfamily. In terms of assembly, monomer. The cofactor is Mg(2+).

It localises to the cytoplasm. The catalysed reaction is shikimate + ATP = 3-phosphoshikimate + ADP + H(+). It functions in the pathway metabolic intermediate biosynthesis; chorismate biosynthesis; chorismate from D-erythrose 4-phosphate and phosphoenolpyruvate: step 5/7. Catalyzes the specific phosphorylation of the 3-hydroxyl group of shikimic acid using ATP as a cosubstrate. This Shigella boydii serotype 4 (strain Sb227) protein is Shikimate kinase 2.